The chain runs to 724 residues: Phosphoribosylformylglycinamidine synthase subunit PurL (724 aa).

His34 is a catalytic residue. ATP-binding residues include Tyr37 and Lys75. Residue Glu77 participates in Mg(2+) binding. Substrate contacts are provided by residues 78–81 (SHNH) and Arg100. His79 functions as the Proton acceptor in the catalytic mechanism. Asp101 contributes to the Mg(2+) binding site. Gln221 serves as a coordination point for substrate. A Mg(2+)-binding site is contributed by Asp249. 292–294 (ESQ) lines the substrate pocket. 2 residues coordinate ATP: Asp478 and Gly515. Ser518 lines the substrate pocket.

It belongs to the FGAMS family. Monomer. Part of the FGAM synthase complex composed of 1 PurL, 1 PurQ and 2 PurS subunits.

Its subcellular location is the cytoplasm. The enzyme catalyses N(2)-formyl-N(1)-(5-phospho-beta-D-ribosyl)glycinamide + L-glutamine + ATP + H2O = 2-formamido-N(1)-(5-O-phospho-beta-D-ribosyl)acetamidine + L-glutamate + ADP + phosphate + H(+). It functions in the pathway purine metabolism; IMP biosynthesis via de novo pathway; 5-amino-1-(5-phospho-D-ribosyl)imidazole from N(2)-formyl-N(1)-(5-phospho-D-ribosyl)glycinamide: step 1/2. Functionally, part of the phosphoribosylformylglycinamidine synthase complex involved in the purines biosynthetic pathway. Catalyzes the ATP-dependent conversion of formylglycinamide ribonucleotide (FGAR) and glutamine to yield formylglycinamidine ribonucleotide (FGAM) and glutamate. The FGAM synthase complex is composed of three subunits. PurQ produces an ammonia molecule by converting glutamine to glutamate. PurL transfers the ammonia molecule to FGAR to form FGAM in an ATP-dependent manner. PurS interacts with PurQ and PurL and is thought to assist in the transfer of the ammonia molecule from PurQ to PurL. The polypeptide is Phosphoribosylformylglycinamidine synthase subunit PurL (Caldivirga maquilingensis (strain ATCC 700844 / DSM 13496 / JCM 10307 / IC-167)).